Reading from the N-terminus, the 163-residue chain is Small ribosomal subunit protein uS5 (163 aa).

The region spanning 8–71 (LVEKIVYLNR…ERAKKDMVQI (64 aa)) is the S5 DRBM domain.

Belongs to the universal ribosomal protein uS5 family. As to quaternary structure, part of the 30S ribosomal subunit. Contacts proteins S4 and S8.

Its function is as follows. With S4 and S12 plays an important role in translational accuracy. In terms of biological role, located at the back of the 30S subunit body where it stabilizes the conformation of the head with respect to the body. The sequence is that of Small ribosomal subunit protein uS5 from Nitratidesulfovibrio vulgaris (strain DSM 19637 / Miyazaki F) (Desulfovibrio vulgaris).